Here is a 455-residue protein sequence, read N- to C-terminus: Phosphoglucosamine mutase (455 aa).

Catalysis depends on S104, which acts as the Phosphoserine intermediate. 4 residues coordinate Mg(2+): S104, D243, D245, and D247. The residue at position 104 (S104) is a Phosphoserine.

This sequence belongs to the phosphohexose mutase family. Mg(2+) is required as a cofactor. In terms of processing, activated by phosphorylation.

It catalyses the reaction alpha-D-glucosamine 1-phosphate = D-glucosamine 6-phosphate. Catalyzes the conversion of glucosamine-6-phosphate to glucosamine-1-phosphate. The protein is Phosphoglucosamine mutase of Synechococcus sp. (strain CC9311).